Here is a 306-residue protein sequence, read N- to C-terminus: Ribonuclease Z (306 aa).

Residues His63, His65, Asp67, His68, His141, Asp211, and His269 each contribute to the Zn(2+) site. Residue Asp67 is the Proton acceptor of the active site.

Belongs to the RNase Z family. Homodimer. It depends on Zn(2+) as a cofactor.

It catalyses the reaction Endonucleolytic cleavage of RNA, removing extra 3' nucleotides from tRNA precursor, generating 3' termini of tRNAs. A 3'-hydroxy group is left at the tRNA terminus and a 5'-phosphoryl group is left at the trailer molecule.. Its function is as follows. Zinc phosphodiesterase, which displays some tRNA 3'-processing endonuclease activity. Probably involved in tRNA maturation, by removing a 3'-trailer from precursor tRNA. In Staphylococcus aureus (strain USA300), this protein is Ribonuclease Z.